The primary structure comprises 55 residues: Small ribosomal subunit protein bS21 (55 aa).

It belongs to the bacterial ribosomal protein bS21 family.

This is Small ribosomal subunit protein bS21 from Phytoplasma mali (strain AT).